The following is a 429-amino-acid chain: Ribonuclease E/G-like protein (429 aa).

Mg(2+) contacts are provided by aspartate 290 and aspartate 332.

It belongs to the RNase E/G family. Mg(2+) serves as cofactor.

The protein resides in the plastid. The protein localises to the chloroplast stroma. Its function is as follows. Involved in intercistronic processing of primary transcripts from chloroplast operons. The endonucleolytic activity of the enzyme depends on the number of phosphates at the 5' end, is inhibited by structured RNA, and preferentially cleaves A/U-rich sequences. This is Ribonuclease E/G-like protein (rne) from Guillardia theta (Cryptophyte).